A 290-amino-acid polypeptide reads, in one-letter code: GTPase Era (290 aa).

Residues 2–144 enclose the Era-type G domain; the sequence is KVLKVGVLGP…AIILEEFKPQ (143 aa). Positions 10-17 are G1; that stretch reads GPTNAGKS. 10–17 is a GTP binding site; sequence GPTNAGKS. The tract at residues 36–40 is G2; sequence NTTLL. The interval 58–61 is G3; the sequence is DVPG. Position 58–62 (58–62) interacts with GTP; sequence DVPGF. The interval 97 to 100 is G4; that stretch reads NKIE. Residues 121–123 form a G5 region; that stretch reads INK. 122 to 125 lines the GTP pocket; the sequence is NKFH. In terms of domain architecture, KH type-2 spans 201 to 279; sequence CKNEIPHIAR…FIDIFVKTEK (79 aa).

The protein belongs to the TRAFAC class TrmE-Era-EngA-EngB-Septin-like GTPase superfamily. Era GTPase family. As to quaternary structure, monomer.

It localises to the cytoplasm. The protein localises to the cell membrane. Functionally, an essential GTPase that binds both GDP and GTP, with rapid nucleotide exchange. Plays a role in 16S rRNA processing and 30S ribosomal subunit biogenesis and possibly also in cell cycle regulation and energy metabolism. The sequence is that of GTPase Era from Mycoplasma genitalium (strain ATCC 33530 / DSM 19775 / NCTC 10195 / G37) (Mycoplasmoides genitalium).